A 105-amino-acid chain; its full sequence is Small ribosomal subunit protein bS18 (105 aa).

The segment at 1-34 (MMINKEQDLNQLETNQEQSVEQNQTDEKRKPKPN) is disordered. A compositionally biased stretch (polar residues) spans 9-23 (LNQLETNQEQSVEQN).

It belongs to the bacterial ribosomal protein bS18 family. Part of the 30S ribosomal subunit. Forms a tight heterodimer with protein bS6.

Binds as a heterodimer with protein bS6 to the central domain of the 16S rRNA, where it helps stabilize the platform of the 30S subunit. The sequence is that of Small ribosomal subunit protein bS18 from Mycoplasma genitalium (strain ATCC 33530 / DSM 19775 / NCTC 10195 / G37) (Mycoplasmoides genitalium).